The following is a 521-amino-acid chain: Ribonuclease Y 1 (521 aa).

Residues 1–21 form a helical membrane-spanning segment; that stretch reads MEIVISAIIGLLIGGTVVFVI. Residues 51 to 87 form a disordered region; the sequence is IKKESENKAKDFESRARKNVEQDIHKQKSTLKNKESQ. Residues 211–271 form the KH domain; that stretch reads TVSVLALPND…VRRELARRTI (61 aa). The 94-residue stretch at 337–430 folds into the HD domain; sequence ALNQSLEVAT…VHAAYTLSSS (94 aa).

The protein belongs to the RNase Y family.

The protein localises to the cell membrane. Endoribonuclease that initiates mRNA decay. The sequence is that of Ribonuclease Y 1 from Bdellovibrio bacteriovorus (strain ATCC 15356 / DSM 50701 / NCIMB 9529 / HD100).